The chain runs to 3707 residues: CUB and sushi domain-containing protein 3 (3707 aa).

The disordered stretch occupies residues 1–21; sequence MKGIRKGESRAKESKPWEPGK. Topologically, residues 1 to 42 are cytoplasmic; that stretch reads MKGIRKGESRAKESKPWEPGKRRCAKCGRLDFILMKKMGIKS. A helical transmembrane segment spans residues 43 to 63; that stretch reads GFTFWNLVFLLTVSCVKGFIY. At 64–3630 the chain is on the extracellular side; sequence TCGGTLKGLN…NQPHGTNSSS (3567 aa). Intrachain disulfides connect Cys65–Cys91, Cys178–Cys218, Cys204–Cys235, and Cys241–Cys267. Residues 65–173 form the CUB 1 domain; it reads CGGTLKGLNG…HGFKVYYEEL (109 aa). N-linked (GlcNAc...) asparagine glycans are attached at residues Asn73 and Asn90. Positions 176–237 constitute a Sushi 1 domain; sequence SSCGNPGVPP…WDFPVPICRA (62 aa). The 105-residue stretch at 241–345 folds into the CUB 2 domain; the sequence is CGGTMRGSSG…RGFSAPYQGS (105 aa). 2 N-linked (GlcNAc...) asparagine glycosylation sites follow: Asn361 and Asn409. The tract at residues 394-435 is disordered; sequence QRVQVTSLRNSGLDPNTSKDGLSPHPADTQSTRRRPRHAEQI. The segment covering 396 to 413 has biased composition (polar residues); it reads VQVTSLRNSGLDPNTSKD. The Sushi 2 domain occupies 484–545; that stretch reads NLCPDPGEPE…WSDHRPVCKV (62 aa). 6 disulfides stabilise this stretch: Cys486-Cys526, Cys512-Cys543, Cys548-Cys574, Cys664-Cys704, Cys690-Cys717, and Cys721-Cys747. Residues 548 to 659 form the CUB 3 domain; that stretch reads CGSNLQGPSG…VGFKVNYKEI (112 aa). A Sushi 3 domain is found at 662-719; the sequence is ESCGDPGTPLYGIREGDGFSNRDVLRFECQFGFELIGEKSIVCQENNQWSANIPICIF. The CUB 4 domain maps to 721-829; the sequence is CLSNFTAPMG…RGFNITYNTF (109 aa). N-linked (GlcNAc...) asparagine glycans are attached at residues Asn724 and Asn823. Residues 832 to 893 form the Sushi 4 domain; the sequence is NECPDPGIPI…WSGLIPKCGA (62 aa). 3 disulfides stabilise this stretch: Cys834–Cys875, Cys860–Cys891, and Cys895–Cys921. In terms of domain architecture, CUB 5 spans 895 to 1003; the sequence is CGGHFSAPSG…NGFKIHYESV (109 aa). An N-linked (GlcNAc...) asparagine glycan is attached at Asn966. The region spanning 1008-1065 is the Sushi 5 domain; that stretch reads YSCLDPGIPVHGRRYGHDFSIGSTVSFSCDSGYRLSHEEPLLCEKNHWWSHPLPTCDA. 3 disulfide bridges follow: Cys1010–Cys1050, Cys1036–Cys1063, and Cys1067–Cys1093. In terms of domain architecture, CUB 6 spans 1067-1177; it reads CGGDVRGPSG…EGFNITFSEY (111 aa). 3 N-linked (GlcNAc...) asparagine glycosylation sites follow: Asn1092, Asn1126, and Asn1171. In terms of domain architecture, Sushi 6 spans 1180–1239; it reads EPCEDPGIPQYGSRIGFNFGIGDTLTFSCSSGYRLEGTSEIICLGGGRRVWSAPLPRCVA. Intrachain disulfides connect Cys1182/Cys1222, Cys1208/Cys1237, and Cys1241/Cys1267. Residues 1241-1349 form the CUB 7 domain; it reads CGASATNNEG…EGFQLVYTSF (109 aa). Asn1280 is a glycosylation site (N-linked (GlcNAc...) asparagine). The Sushi 7 domain maps to 1352–1412; sequence SHCEDPGIPQ…WDYPLPSCIA (61 aa). Cystine bridges form between Cys1354/Cys1395, Cys1381/Cys1410, Cys1414/Cys1441, Cys1528/Cys1568, Cys1554/Cys1584, Cys1588/Cys1614, Cys1701/Cys1741, Cys1727/Cys1758, Cys1762/Cys1788, Cys1878/Cys1918, Cys1904/Cys1935, and Cys1939/Cys1965. The CUB 8 domain occupies 1414–1523; sequence CGGRFKGESS…SGFAIQFSSS (110 aa). A Sushi 8 domain is found at 1526–1586; that stretch reads TACRDPGVPM…WQPSPPVCIA (61 aa). A glycan (N-linked (GlcNAc...) asparagine) is linked at Asn1536. A CUB 9 domain is found at 1588 to 1696; that stretch reads CGGNLTGSSG…TGFHLEYKAK (109 aa). Residues Asn1591 and Asn1709 are each glycosylated (N-linked (GlcNAc...) asparagine). The 62-residue stretch at 1699 to 1760 folds into the Sushi 9 domain; the sequence is ESCFDPGNIM…WNRALPSCHA (62 aa). A CUB 10 domain is found at 1762 to 1870; the sequence is CGSRSTGSEG…KGFHFVYQAV (109 aa). Asn1781 is a glycosylation site (N-linked (GlcNAc...) asparagine). The region spanning 1876-1937 is the Sushi 10 domain; the sequence is TQCSSVPEPR…WNDSLPTCIV (62 aa). Asn1929 carries N-linked (GlcNAc...) asparagine glycosylation. Residues 1939–2047 form the CUB 11 domain; it reads CGGILTKRKG…AGFHLEYTAI (109 aa). N-linked (GlcNAc...) asparagine glycosylation is present at Asn2019. Residues 2050–2109 enclose the Sushi 11 domain; that stretch reads DSCPEPQTPSSGIKIGDRYMVGDVVSFQCDQGYSLQGHSHITCMPGPVRRWNYPIPICLA. Disulfide bonds link Cys2052–Cys2092, Cys2078–Cys2107, and Cys2111–Cys2137. The 109-residue stretch at 2111–2219 folds into the CUB 12 domain; that stretch reads CGGAMSDFSG…QGFHIVYQAY (109 aa). Residue Asn2155 is glycosylated (N-linked (GlcNAc...) asparagine). One can recognise a Sushi 12 domain in the interval 2222-2281; it reads QSCPDPRPFRNGFVIGNDFTVGQTISFECFPGYTLIGNSALTCLHGVSRNWNHPLPRCEA. 3 disulfides stabilise this stretch: Cys2224-Cys2264, Cys2250-Cys2279, and Cys2283-Cys2309. One can recognise a CUB 13 domain in the interval 2283-2394; the sequence is CGGNITAMNG…LSYHAYQLRV (112 aa). 3 N-linked (GlcNAc...) asparagine glycosylation sites follow: Asn2286, Asn2291, and Asn2324. A Sushi 13 domain is found at 2393 to 2454; sequence RVCQPPPPVP…MDGAPPVCQV (62 aa). Disulfide bonds link Cys2395/Cys2437, Cys2423/Cys2452, and Cys2456/Cys2484. A CUB 14 domain is found at 2456–2567; the sequence is CPANELRLDS…KGFRIRYIAF (112 aa). N-linked (GlcNAc...) asparagine glycosylation is found at Asn2495 and Asn2537. 15 Sushi domains span residues 2567–2629, 2630–2691, 2692–2756, 2757–2814, 2815–2872, 2873–2930, 2931–2992, 2993–3050, 3054–3111, 3112–3170, 3171–3230, 3231–3288, 3289–3346, 3350–3408, and 3409–3468; these read FYCS…ACQA, ISCG…RCVV, VTCP…YCQI, ISCG…RCLA, GHCG…SCVP, VSCG…MCKV, VNCS…ECIM, IDCG…HCSG, GTCG…ECKA, VQCG…NCTI, ISCG…TCRA, VTCP…QCLP, KFCG…HCIE, TSCE…ECIP, and HSCK…ICEA. Intrachain disulfides connect Cys2569–Cys2610, Cys2596–Cys2627, Cys2632–Cys2674, Cys2658–Cys2689, Cys2694–Cys2739, Cys2725–Cys2754, Cys2759–Cys2799, Cys2785–Cys2812, Cys2817–Cys2857, Cys2843–Cys2870, Cys2875–Cys2915, and Cys2901–Cys2928. N-linked (GlcNAc...) asparagine glycosylation is found at Asn2711 and Asn2742. A glycan (N-linked (GlcNAc...) asparagine) is linked at Asn2862. N-linked (GlcNAc...) asparagine glycans are attached at residues Asn2932 and Asn2952. Intrachain disulfides connect Cys2933-Cys2977, Cys2963-Cys2990, Cys2995-Cys3035, Cys3021-Cys3048, Cys3056-Cys3096, Cys3082-Cys3109, Cys3114-Cys3155, Cys3141-Cys3168, Cys3173-Cys3215, Cys3199-Cys3228, Cys3233-Cys3273, Cys3259-Cys3286, Cys3291-Cys3331, Cys3317-Cys3344, Cys3352-Cys3393, Cys3379-Cys3406, Cys3411-Cys3453, and Cys3438-Cys3466. N-linked (GlcNAc...) asparagine glycosylation is present at Asn3099. N-linked (GlcNAc...) asparagine glycosylation is found at Asn3158, Asn3167, Asn3194, Asn3208, and Asn3218. The N-linked (GlcNAc...) asparagine glycan is linked to Asn3276. Asn3364 carries an N-linked (GlcNAc...) asparagine glycan. Residues Asn3522, Asn3529, Asn3612, Asn3618, and Asn3627 are each glycosylated (N-linked (GlcNAc...) asparagine). The helical transmembrane segment at 3631-3651 threads the bilayer; the sequence is VAIAILVPFFALIFAGFGFYL. At 3652 to 3707 the chain is on the cytoplasmic side; the sequence is YKQRTAPKTQYTGCSVHENNNGQAAFENPMYDTNAKSVEGKAVRFDPNLNTVCTMV.

The protein belongs to the CSMD family. As to expression, weakly expressed in most tissues, except in brain. Expressed at intermediate level in brain, including cerebellum, substantia nigra, thalamus, spinal cord, hippocampus and fetal brain. Also expressed in testis.

Its subcellular location is the cell membrane. In terms of biological role, involved in dendrite development. This chain is CUB and sushi domain-containing protein 3 (CSMD3), found in Homo sapiens (Human).